A 239-amino-acid polypeptide reads, in one-letter code: Sugar fermentation stimulation protein homolog (239 aa).

It belongs to the SfsA family.

In Cyanothece sp. (strain PCC 7425 / ATCC 29141), this protein is Sugar fermentation stimulation protein homolog.